A 407-amino-acid chain; its full sequence is Venom metalloproteinase 3 (407 aa).

Residues Asn-42, Asn-91, Asn-126, and Asn-166 are each glycosylated (N-linked (GlcNAc...) asparagine). The 215-residue stretch at 191-405 (FYPKLLVLVD…TSAACLKDTY (215 aa)) folds into the Peptidase M12B domain. 2 disulfide bridges follow: Cys-317-Cys-400 and Cys-356-Cys-384. His-340 serves as a coordination point for Zn(2+). Glu-341 is an active-site residue. The Zn(2+) site is built by His-344 and His-350. Asn-391 carries an N-linked (GlcNAc...) asparagine glycan.

The protein in the C-terminal section; belongs to the venom metalloproteinase (M12B) family. As to quaternary structure, monomer. The cofactor is Zn(2+). Expressed by the venom gland.

It localises to the secreted. The gelatinase activity is inhibited by EDTA. The recombinant protein has gelatinase activity. In vivo, injection of this recombinant into fifth instar L.oleracea (host) larvae results in partial insect mortality associated with the molt to sixth instar, with surviving insects showing retarded development and growth. The protein is Venom metalloproteinase 3 of Eulophus pennicornis (Parasitoid wasp).